We begin with the raw amino-acid sequence, 139 residues long: Exodeoxyribonuclease 7 small subunit (139 aa).

Disordered regions lie at residues 1-26 (MAKK…LGDF) and 82-139 (DAEG…EDDE). The span at 130 to 139 (ADLDSAEDDE) shows a compositional bias: acidic residues.

This sequence belongs to the XseB family. In terms of assembly, heterooligomer composed of large and small subunits.

It is found in the cytoplasm. It catalyses the reaction Exonucleolytic cleavage in either 5'- to 3'- or 3'- to 5'-direction to yield nucleoside 5'-phosphates.. In terms of biological role, bidirectionally degrades single-stranded DNA into large acid-insoluble oligonucleotides, which are then degraded further into small acid-soluble oligonucleotides. The protein is Exodeoxyribonuclease 7 small subunit of Rhodopirellula baltica (strain DSM 10527 / NCIMB 13988 / SH1).